Consider the following 1468-residue polypeptide: Neuropathy target esterase sws (1468 aa).

The Lumenal portion of the chain corresponds to 1–34; it reads MDVLEMLRASASGSYNTIFSDAWCQYVSKQITAT. Residues 35 to 55 form a helical membrane-spanning segment; sequence VYMYCALVMMSLLFIAWFLYF. The Cytoplasmic segment spans residues 56-1468; that stretch reads KRMARLRLRD…RSSPNNETKN (1413 aa). 174 to 301 contacts a nucleoside 3',5'-cyclic phosphate; the sequence is IFGHFEKPVF…IRVIQVIMIR (128 aa). 2 stretches are compositionally biased toward polar residues: residues 332-348 and 357-366; these read TMSG…SRQA and NQLNLMQSAA. Positions 332–411 are disordered; the sequence is TMSGPINSQT…DGSFHGTTNL (80 aa). A phosphoserine mark is found at S442 and S451. Residues 480 to 607 and 596 to 723 contribute to the a nucleoside 3',5'-cyclic phosphate site; these read ELGL…VVRR and IVLD…LSHR. The region spanning 950–1116 is the PNPLA domain; sequence LVLGGGGARG…VNNLPGHLWR (167 aa). The short motif at 954-959 is the GXGXXG element; that stretch reads GGGARG. The GXSXG signature appears at 981–985; it reads GVSIG. The active-site Nucleophile is the S983. D1103 functions as the Proton acceptor in the catalytic mechanism. Residues 1103–1105 carry the DGA/G motif; the sequence is DGG. Phosphoserine is present on S1197. The interval 1368 to 1468 is disordered; that stretch reads ERKMDKSTQS…RSSPNNETKN (101 aa). The span at 1374–1383 shows a compositional bias: low complexity; that stretch reads STQSSPPTSS. Residues 1385–1395 are compositionally biased toward basic and acidic residues; sequence TDMRGKEEAKH. The span at 1419–1441 shows a compositional bias: low complexity; that stretch reads TQTGQEQELQQQQKLQQLQQDQG. A compositionally biased stretch (basic and acidic residues) spans 1446–1459; it reads QLVDKDKEEDKENR.

This sequence belongs to the NTE family. Interacts with Pka-C3; interaction inhibits the catalytic function of Pka-C3 and the esterase activity of sws.

Its subcellular location is the endoplasmic reticulum membrane. The enzyme catalyses a 1-acyl-sn-glycero-3-phosphocholine + H2O = sn-glycerol 3-phosphocholine + a fatty acid + H(+). Phospholipase B that deacylates intracellular phosphatidylcholine (PtdCho), generating glycerophosphocholine (GroPtdCho). This deacylation occurs at both sn-2 and sn-1 positions of PtdCho. Its specific chemical modification by certain organophosphorus (OP) compounds leads to distal axonopathy. Plays a role in the signaling mechanism between neurons and glia that regulates glia wrapping during development of the adult brain. Essential for membrane lipid homeostasis and cell survival in both neurons and glia of the adult brain. This is Neuropathy target esterase sws from Drosophila sechellia (Fruit fly).